The sequence spans 421 residues: UDP-N-acetylglucosamine 1-carboxyvinyltransferase 1 (421 aa).

22–23 provides a ligand contact to phosphoenolpyruvate; it reads KN. R95 is a binding site for UDP-N-acetyl-alpha-D-glucosamine. The active-site Proton donor is the C119. C119 is modified (2-(S-cysteinyl)pyruvic acid O-phosphothioketal). UDP-N-acetyl-alpha-D-glucosamine-binding positions include 124–128, D308, and V330; that span reads RPIEQ.

Belongs to the EPSP synthase family. MurA subfamily.

Its subcellular location is the cytoplasm. It catalyses the reaction phosphoenolpyruvate + UDP-N-acetyl-alpha-D-glucosamine = UDP-N-acetyl-3-O-(1-carboxyvinyl)-alpha-D-glucosamine + phosphate. Its pathway is cell wall biogenesis; peptidoglycan biosynthesis. Cell wall formation. Adds enolpyruvyl to UDP-N-acetylglucosamine. The polypeptide is UDP-N-acetylglucosamine 1-carboxyvinyltransferase 1 (Staphylococcus aureus (strain bovine RF122 / ET3-1)).